We begin with the raw amino-acid sequence, 317 residues long: Serine/threonine-protein phosphatase PP1 isozyme 1 (317 aa).

Residues Asp75, His77, Asp103, and Asn135 each contribute to the Mn(2+) site. Catalysis depends on His136, which acts as the Proton donor. Residues His184 and His259 each coordinate Mn(2+).

Belongs to the PPP phosphatase family. PP-1 subfamily. Mn(2+) is required as a cofactor.

The enzyme catalyses O-phospho-L-seryl-[protein] + H2O = L-seryl-[protein] + phosphate. It catalyses the reaction O-phospho-L-threonyl-[protein] + H2O = L-threonyl-[protein] + phosphate. In Nicotiana tabacum (Common tobacco), this protein is Serine/threonine-protein phosphatase PP1 isozyme 1 (NPP1).